We begin with the raw amino-acid sequence, 329 residues long: tRNA dimethylallyltransferase (329 aa).

Gly24–Thr31 contacts ATP. Thr26 to Thr31 contributes to the substrate binding site. The interval Asp49 to Gln52 is interaction with substrate tRNA.

It belongs to the IPP transferase family. In terms of assembly, monomer. It depends on Mg(2+) as a cofactor.

It carries out the reaction adenosine(37) in tRNA + dimethylallyl diphosphate = N(6)-dimethylallyladenosine(37) in tRNA + diphosphate. Functionally, catalyzes the transfer of a dimethylallyl group onto the adenine at position 37 in tRNAs that read codons beginning with uridine, leading to the formation of N6-(dimethylallyl)adenosine (i(6)A). The polypeptide is tRNA dimethylallyltransferase (Methylacidiphilum infernorum (isolate V4) (Methylokorus infernorum (strain V4))).